We begin with the raw amino-acid sequence, 295 residues long: MWFKRIGLFLLTNILVVVTISIVTSVLGIGPYLDANGLNLSSLVIFCFLWGMGGAFVSLLLSKFMAKMMMGVQIIDPRSASGAERELYSRVERLARAANLPMPEVGIYHSPEVNAFATGPSKSSSLVAVSSGLLQVMDNAEVEGVLAHELAHVANGDMVTMTLIQGIVNAFVMFFSRIISYALSTMVKDEMQYTVRLISNIVLSILFSILGSIVVAYFSRTREYRADAGGAKLVGRQNMIAALEKLRRTFDAPEDERGKEALATMKISGHNKWMALFSTHPPLEARIAALKNSGY.

2 helical membrane passes run 6–26 and 40–60; these read IGLF…VTSV and LSSL…VSLL. Zn(2+) is bound at residue histidine 148. Residue glutamate 149 is part of the active site. Histidine 152 lines the Zn(2+) pocket. The next 2 membrane-spanning stretches (helical) occupy residues 163–183 and 198–218; these read LIQG…SYAL and ISNI…VAYF. Glutamate 223 is a Zn(2+) binding site.

It belongs to the peptidase M48B family. It depends on Zn(2+) as a cofactor.

The protein resides in the cell inner membrane. The sequence is that of Protease HtpX homolog from Leptospira borgpetersenii serovar Hardjo-bovis (strain JB197).